Here is a 99-residue protein sequence, read N- to C-terminus: Keratinocyte differentiation-associated protein (99 aa).

Residues 1-22 form the signal peptide; that stretch reads MKIPVLPAVVLLSLLVLHSAQG.

As to expression, highly expressed in skin and detected at lower levels in thymus. In skin, found exclusively in lamellar granules of granular keratinocytes and in the intracellular space of the stratum corneum. Also highly expressed in oral mucosa, tongue, esophagus, and stomach, and at much lower levels in bladder and uterus. Not detected in gastrointestinal mucosa.

It is found in the secreted. Functionally, may act as a soluble regulator of keratinocyte differentiation. May play an important role in embryonic skin morphogenesis. This is Keratinocyte differentiation-associated protein (KRTDAP) from Homo sapiens (Human).